The primary structure comprises 1514 residues: Helicase SWR1 (1514 aa).

Residues 339 to 411 enclose the HSA domain; sequence ISYFYKQQDL…EERHKKSLAR (73 aa). Over residues 465-480 the composition is skewed to polar residues; it reads QVNDDGRSSTPSSDSN. Disordered stretches follow at residues 465 to 524 and 538 to 641; these read QVND…PTDE and FNGS…KDQV. The span at 484–508 shows a compositional bias: acidic residues; that stretch reads SESDDDMDDELSTSSDEDEEVDADV. The segment covering 513–524 has biased composition (polar residues); the sequence is SPASTEATPTDE. Basic and acidic residues predominate over residues 547-563; that stretch reads SRNKDEKFPTLDKHESS. Residues 564-586 are compositionally biased toward low complexity; it reads SSESSVMTGEESSIYSSSENESQ. Residues 588–597 show a composition bias toward basic and acidic residues; it reads ENDRESDDKT. The span at 612–623 shows a compositional bias: acidic residues; the sequence is SDGDLDLDDSED. A Helicase ATP-binding domain is found at 708–873; sequence ASLYNNHTNG…WSLLYFLMPQ (166 aa). 721–728 contributes to the ATP binding site; the sequence is DEMGLGKT. A DEAH box motif is present at residues 824–827; that stretch reads DEAH. Positions 1247 to 1400 constitute a Helicase C-terminal domain; the sequence is KLQKLAILLQ…NVVIQEGDFT (154 aa). Positions 1469-1490 are disordered; it reads NDDFDESTEKKAANEEEENHAE. Over residues 1475–1490 the composition is skewed to basic and acidic residues; that stretch reads STEKKAANEEEENHAE.

This sequence belongs to the SNF2/RAD54 helicase family. SWR1 subfamily. In terms of assembly, component of the SWR1 chromatin-remodeling complex composed of at least ACT1, ARP4, RVB1, RVB2, ARP6, YAF9, VPS71, VPS72, SWC3, SWC4, SWC5, SWC7 and SWR1, and perhaps BDF1.

The protein resides in the nucleus. The enzyme catalyses ATP + H2O = ADP + phosphate + H(+). In terms of biological role, catalytic component of the SWR1 complex which mediates the ATP-dependent exchange of histone H2A for the H2A variant HZT1 leading to transcriptional regulation of selected genes by chromatin remodeling. The chain is Helicase SWR1 (SWR1) from Saccharomyces cerevisiae (strain ATCC 204508 / S288c) (Baker's yeast).